Consider the following 89-residue polypeptide: Small ribosomal subunit protein uS15 (89 aa).

Belongs to the universal ribosomal protein uS15 family. In terms of assembly, part of the 30S ribosomal subunit. Forms a bridge to the 50S subunit in the 70S ribosome, contacting the 23S rRNA.

One of the primary rRNA binding proteins, it binds directly to 16S rRNA where it helps nucleate assembly of the platform of the 30S subunit by binding and bridging several RNA helices of the 16S rRNA. Functionally, forms an intersubunit bridge (bridge B4) with the 23S rRNA of the 50S subunit in the ribosome. This chain is Small ribosomal subunit protein uS15, found in Rhizobium meliloti (strain 1021) (Ensifer meliloti).